Reading from the N-terminus, the 221-residue chain is Putative transmembrane protein ORF25 (221 aa).

The first 23 residues, 1–23, serve as a signal peptide directing secretion; it reads MTLAAKLIVLVYVALCFVNESTS. Asparagine 19 and asparagine 179 each carry an N-linked (GlcNAc...) asparagine; by host glycan. At 24 to 191 the chain is on the extracellular side; that stretch reads QDHSNIYHET…LAKARGVPMS (168 aa). The helical transmembrane segment at 192-212 threads the bilayer; the sequence is VSVISGICAIILVIFPIFITI. At 213-221 the chain is on the cytoplasmic side; it reads ANLRRVYLH.

Its subcellular location is the host membrane. The chain is Putative transmembrane protein ORF25 from Ostreid herpesvirus 1 (isolate France) (OsHV-1).